Consider the following 231-residue polypeptide: MSELPQYKKDFLKSAIDGNILKFGSFLLKSGRTSPYFFNAGDFYRADLLNSISTAYALTIDSLPIQYDIIFGPAYKGIPLATAATIKLGQIRPRAKYAVGRVLVRDRKEAKDHGEGGNIVGAPLKGKRVLIVDDVISRCTAKREPSPRLEKEGGIVAGIVVALDRMEKLPAKDGDDSKPGPSALGELKKEYNLPIYAILTLDDIIEGIKGLVGEEDIKRTEEYREKYKATD.

Position 29 (lysine 29) interacts with 5-phospho-alpha-D-ribose 1-diphosphate. 37–38 (FF) contacts orotate. Residues 75–76 (YK), arginine 107, lysine 108, lysine 111, histidine 113, and 133–141 (DDVISRCTA) each bind 5-phospho-alpha-D-ribose 1-diphosphate. Orotate contacts are provided by serine 137 and arginine 165.

It belongs to the purine/pyrimidine phosphoribosyltransferase family. PyrE subfamily. Homodimer.

It carries out the reaction orotidine 5'-phosphate + diphosphate = orotate + 5-phospho-alpha-D-ribose 1-diphosphate. Its pathway is pyrimidine metabolism; UMP biosynthesis via de novo pathway; UMP from orotate: step 1/2. Functionally, catalyzes the transfer of a ribosyl phosphate group from 5-phosphoribose 1-diphosphate to orotate, leading to the formation of orotidine monophosphate (OMP). The sequence is that of Orotate phosphoribosyltransferase (URA5) from Podospora anserina (Pleurage anserina).